We begin with the raw amino-acid sequence, 535 residues long: MYLQRWLFSTNAKDIAILYFIFSTFCGLAGTAMSFIIRMELSAPGQQYLQGQNQLFNVLVTGHTILMVFFLVMPMLIGGFGNYYLPLMIGASDMSFARLNNISFWTLPPTLICLLTSTMVESGTGTGWTVYPPLSSIQSHSGASVDLAIFSLHLTTISSLLGTINFIVTALNMRTNGMTLHKMPLFTWSILITAVMLLMSLPVLSAGVTMLLMDRNFNTSFFEVQGGGDPILYQHLFWFFGHPEVYIMIVPTFGMMSHIVSTYSKKPVFGEISMIYTMGSISLLGFLVWSHHMYVVGLDTDTRAYFTSATMIITIPTSIKVFSWLTTIYGGSLRLTTPMLYTLSFLFLFTVGGLTGVVLANTSLDVAFHDTYYVVTHFHYVLSLGAVFSMFAGYYYWSPTVLGLNYNEKLSQIQFWLIFLGTNIIFFPMHFLGINGMPRRIPDYPDTFTGWNLVSSFGSMMTIMSLMLFTYIIYDQLMNGLTNKVNNKSINYMKTPDFIESNNIFLMNTTKSSSIEFMLNSPPTIHSFNTPTIQS.

Residues 15–37 (IAILYFIFSTFCGLAGTAMSFII) traverse the membrane as a helical segment. Ca(2+)-binding residues include Glu-40, Ala-43, and Gly-45. 5 consecutive transmembrane segments (helical) span residues 58 to 80 (VLVT…IGGF), 147 to 169 (LAIF…FIVT), 190 to 212 (ILIT…TMLL), 238 to 260 (WFFG…SHIV), and 267 to 289 (PVFG…FLVW). Residue His-63 participates in Fe(II)-heme a binding. A Cu cation-binding site is contributed by His-242. Positions 242–246 (HPEVY) form a cross-link, 1'-histidyl-3'-tyrosine (His-Tyr). Tyr-246 is an O2 binding site. Residues His-291 and His-292 each coordinate Cu cation. The next 2 membrane-spanning stretches (helical) occupy residues 304 to 326 (AYFT…SWLT) and 339 to 361 (MLYT…VLAN). Positions 369 and 370 each coordinate Mg(2+). The next 2 membrane-spanning stretches (helical) occupy residues 376 to 398 (THFH…YYWS) and 415 to 437 (FWLI…INGM). His-377 is a binding site for heme a3. His-379 serves as a coordination point for Fe(II)-heme a. Ca(2+) is bound at residue Pro-442. A helical transmembrane segment spans residues 452–474 (NLVSSFGSMMTIMSLMLFTYIIY).

Belongs to the heme-copper respiratory oxidase family. Component of the cytochrome c oxidase (complex IV, CIV), a multisubunit enzyme composed of a catalytic core of 3 subunits and several supernumerary subunits. The complex exists as a monomer or a dimer and forms supercomplexes (SCs) in the inner mitochondrial membrane with ubiquinol-cytochrome c oxidoreductase (cytochrome b-c1 complex, complex III, CIII). It depends on heme as a cofactor. The cofactor is Cu cation.

The protein resides in the mitochondrion inner membrane. It carries out the reaction 4 Fe(II)-[cytochrome c] + O2 + 8 H(+)(in) = 4 Fe(III)-[cytochrome c] + 2 H2O + 4 H(+)(out). It participates in energy metabolism; oxidative phosphorylation. Functionally, component of the cytochrome c oxidase, the last enzyme in the mitochondrial electron transport chain which drives oxidative phosphorylation. The respiratory chain contains 3 multisubunit complexes succinate dehydrogenase (complex II, CII), ubiquinol-cytochrome c oxidoreductase (cytochrome b-c1 complex, complex III, CIII) and cytochrome c oxidase (complex IV, CIV), that cooperate to transfer electrons derived from NADH and succinate to molecular oxygen, creating an electrochemical gradient over the inner membrane that drives transmembrane transport and the ATP synthase. Cytochrome c oxidase is the component of the respiratory chain that catalyzes the reduction of oxygen to water. Electrons originating from reduced cytochrome c in the intermembrane space (IMS) are transferred via the dinuclear copper A center (CU(A)) of subunit 2 and heme A of subunit 1 to the active site in subunit 1, a binuclear center (BNC) formed by heme A3 and copper B (CU(B)). The BNC reduces molecular oxygen to 2 water molecules using 4 electrons from cytochrome c in the IMS and 4 protons from the mitochondrial matrix. In Eremothecium gossypii (strain ATCC 10895 / CBS 109.51 / FGSC 9923 / NRRL Y-1056) (Yeast), this protein is Cytochrome c oxidase subunit 1 (COX1).